A 193-amino-acid polypeptide reads, in one-letter code: Phosphoheptose isomerase (193 aa).

The SIS domain maps to 37 to 193; that stretch reads LADSFKAGGK…MLIEKEMAKG (157 aa). Position 52–54 (52–54) interacts with substrate; the sequence is NGG. Positions 61 and 65 each coordinate Zn(2+). Residues Glu65, 93-94, 119-121, Ser124, and Gln172 each bind substrate; these read ND and STS. Residues Gln172 and His180 each coordinate Zn(2+).

It belongs to the SIS family. GmhA subfamily. In terms of assembly, homotetramer. Zn(2+) is required as a cofactor.

The protein resides in the cytoplasm. The catalysed reaction is 2 D-sedoheptulose 7-phosphate = D-glycero-alpha-D-manno-heptose 7-phosphate + D-glycero-beta-D-manno-heptose 7-phosphate. The protein operates within carbohydrate biosynthesis; D-glycero-D-manno-heptose 7-phosphate biosynthesis; D-glycero-alpha-D-manno-heptose 7-phosphate and D-glycero-beta-D-manno-heptose 7-phosphate from sedoheptulose 7-phosphate: step 1/1. Functionally, catalyzes the isomerization of sedoheptulose 7-phosphate in D-glycero-D-manno-heptose 7-phosphate. In Klebsiella pneumoniae subsp. pneumoniae (strain ATCC 700721 / MGH 78578), this protein is Phosphoheptose isomerase.